The primary structure comprises 149 residues: Nucleoside diphosphate kinase (149 aa).

6 residues coordinate ATP: lysine 9, phenylalanine 57, arginine 85, threonine 91, arginine 102, and asparagine 112. Histidine 115 acts as the Pros-phosphohistidine intermediate in catalysis.

Belongs to the NDK family. Mg(2+) is required as a cofactor.

The protein resides in the cytoplasm. The enzyme catalyses a 2'-deoxyribonucleoside 5'-diphosphate + ATP = a 2'-deoxyribonucleoside 5'-triphosphate + ADP. It catalyses the reaction a ribonucleoside 5'-diphosphate + ATP = a ribonucleoside 5'-triphosphate + ADP. Functionally, major role in the synthesis of nucleoside triphosphates other than ATP. The ATP gamma phosphate is transferred to the NDP beta phosphate via a ping-pong mechanism, using a phosphorylated active-site intermediate. The chain is Nucleoside diphosphate kinase from Methanosarcina mazei (strain ATCC BAA-159 / DSM 3647 / Goe1 / Go1 / JCM 11833 / OCM 88) (Methanosarcina frisia).